We begin with the raw amino-acid sequence, 380 residues long: Lipid-A-disaccharide synthase (380 aa).

The protein belongs to the LpxB family.

It catalyses the reaction a lipid X + a UDP-2-N,3-O-bis[(3R)-3-hydroxyacyl]-alpha-D-glucosamine = a lipid A disaccharide + UDP + H(+). Its pathway is bacterial outer membrane biogenesis; LPS lipid A biosynthesis. Functionally, condensation of UDP-2,3-diacylglucosamine and 2,3-diacylglucosamine-1-phosphate to form lipid A disaccharide, a precursor of lipid A, a phosphorylated glycolipid that anchors the lipopolysaccharide to the outer membrane of the cell. The protein is Lipid-A-disaccharide synthase of Francisella tularensis subsp. tularensis (strain FSC 198).